The chain runs to 586 residues: Penicillin-binding protein activator LpoA (586 aa).

Positions 1-26 (MLSILMQGLRLKKCFLPILVMFFLAG) are cleaved as a signal peptide. Cys27 carries the N-palmitoyl cysteine lipid modification. Residue Cys27 is the site of S-diacylglycerol cysteine attachment.

It belongs to the LpoA family. As to quaternary structure, interacts with PBP1a.

Its subcellular location is the cell outer membrane. Regulator of peptidoglycan synthesis that is essential for the function of penicillin-binding protein 1A (PBP1a). This is Penicillin-binding protein activator LpoA from Histophilus somni (strain 2336) (Haemophilus somnus).